A 466-amino-acid chain; its full sequence is ATP synthase subunit beta (466 aa).

152 to 159 lines the ATP pocket; it reads GGAGVGKT.

This sequence belongs to the ATPase alpha/beta chains family. In terms of assembly, F-type ATPases have 2 components, CF(1) - the catalytic core - and CF(0) - the membrane proton channel. CF(1) has five subunits: alpha(3), beta(3), gamma(1), delta(1), epsilon(1). CF(0) has three main subunits: a(1), b(2) and c(9-12). The alpha and beta chains form an alternating ring which encloses part of the gamma chain. CF(1) is attached to CF(0) by a central stalk formed by the gamma and epsilon chains, while a peripheral stalk is formed by the delta and b chains.

It is found in the cell inner membrane. The enzyme catalyses ATP + H2O + 4 H(+)(in) = ADP + phosphate + 5 H(+)(out). Its function is as follows. Produces ATP from ADP in the presence of a proton gradient across the membrane. The catalytic sites are hosted primarily by the beta subunits. In Sulfurovum sp. (strain NBC37-1), this protein is ATP synthase subunit beta.